A 476-amino-acid polypeptide reads, in one-letter code: UDP-N-acetylmuramate--L-alanine ligase (476 aa).

An ATP-binding site is contributed by 126–132; the sequence is GAHGKTT.

It belongs to the MurCDEF family.

The protein resides in the cytoplasm. The catalysed reaction is UDP-N-acetyl-alpha-D-muramate + L-alanine + ATP = UDP-N-acetyl-alpha-D-muramoyl-L-alanine + ADP + phosphate + H(+). The protein operates within cell wall biogenesis; peptidoglycan biosynthesis. In terms of biological role, cell wall formation. This chain is UDP-N-acetylmuramate--L-alanine ligase, found in Psychrobacter sp. (strain PRwf-1).